The sequence spans 320 residues: Dual oxidase maturation factor 2 (320 aa).

A helical membrane pass occupies residues 22 to 42 (VPLLIVILVFLSLAASFLFIL). Residues 43 to 51 (PGIRGHSRW) are Cytoplasmic-facing. A helical transmembrane segment spans residues 52-72 (FWLVRVLLSLFIGAEIVAVHF). Residues 73 to 183 (SGDWFVGRVW…HLAGHYAAAT (111 aa)) are Extracellular-facing. 3 N-linked (GlcNAc...) asparagine glycosylation sites follow: asparagine 84, asparagine 109, and asparagine 121. Residues 184–204 (LWVAFCFWIIANALLSMPAPL) form a helical membrane-spanning segment. The Cytoplasmic segment spans residues 205 to 206 (YG). The helical transmembrane segment at 207–227 (GLALLTTGAFTLFGVFAFASI) threads the bilayer. Residues 228–249 (SSVPLCHFRLGSAVLTPYYGAS) are Extracellular-facing. Residues 250–270 (FWLTLATGILSLLLGGAVVIL) form a helical membrane-spanning segment. Residues 271–320 (HYTRPSALRSFLDLSVKDCSNQAKGNSPLTLNNPQHEQLKSPDLNITTLL) are Cytoplasmic-facing.

Belongs to the DUOXA family. Heterodimer with DUXA2; disulfide-linked. Interacts with CSNK1G2. Post-translationally, N-glycosylated.

It is found in the endoplasmic reticulum membrane. Its function is as follows. Required for the maturation and the transport from the endoplasmic reticulum to the plasma membrane of functional DUOX2. May play a role in thyroid hormone synthesis. This is Dual oxidase maturation factor 2 (Duoxa2) from Mus musculus (Mouse).